We begin with the raw amino-acid sequence, 202 residues long: Na(+)-translocating NADH-quinone reductase subunit E (202 aa).

The next 6 membrane-spanning stretches (helical) occupy residues 4-24, 35-55, 81-101, 114-134, 144-164, and 180-200; these read LAGL…FFLG, IEVA…TVPI, FLGL…LEMF, GIYL…LFMV, LVYG…LAGV, and LGIT…FSGI.

The protein belongs to the NqrDE/RnfAE family. As to quaternary structure, composed of six subunits; NqrA, NqrB, NqrC, NqrD, NqrE and NqrF.

It localises to the cell inner membrane. It carries out the reaction a ubiquinone + n Na(+)(in) + NADH + H(+) = a ubiquinol + n Na(+)(out) + NAD(+). In terms of biological role, NQR complex catalyzes the reduction of ubiquinone-1 to ubiquinol by two successive reactions, coupled with the transport of Na(+) ions from the cytoplasm to the periplasm. NqrA to NqrE are probably involved in the second step, the conversion of ubisemiquinone to ubiquinol. The sequence is that of Na(+)-translocating NADH-quinone reductase subunit E from Nitrosomonas europaea (strain ATCC 19718 / CIP 103999 / KCTC 2705 / NBRC 14298).